Reading from the N-terminus, the 139-residue chain is Large ribosomal subunit protein uL16 (139 aa).

Basic residues predominate over residues 1 to 17; the sequence is MLIPRKVKHRKQHHPGR. A disordered region spans residues 1-24; it reads MLIPRKVKHRKQHHPGRTGHATGG.

Belongs to the universal ribosomal protein uL16 family. In terms of assembly, part of the 50S ribosomal subunit.

Binds 23S rRNA and is also seen to make contacts with the A and possibly P site tRNAs. The polypeptide is Large ribosomal subunit protein uL16 (Clavibacter michiganensis subsp. michiganensis (strain NCPPB 382)).